The primary structure comprises 329 residues: Glycerol-3-phosphate dehydrogenase [NAD(P)+] (329 aa).

Residues Trp11, Arg30, and Lys103 each coordinate NADPH. Lys103, Gly132, and Ser134 together coordinate sn-glycerol 3-phosphate. Residue Ala136 participates in NADPH binding. Residues Lys187, Asp240, Ser250, Arg251, and Asn252 each contribute to the sn-glycerol 3-phosphate site. Lys187 acts as the Proton acceptor in catalysis. Arg251 contributes to the NADPH binding site. NADPH contacts are provided by Val275 and Glu277.

The protein belongs to the NAD-dependent glycerol-3-phosphate dehydrogenase family.

Its subcellular location is the cytoplasm. The catalysed reaction is sn-glycerol 3-phosphate + NAD(+) = dihydroxyacetone phosphate + NADH + H(+). It catalyses the reaction sn-glycerol 3-phosphate + NADP(+) = dihydroxyacetone phosphate + NADPH + H(+). It functions in the pathway membrane lipid metabolism; glycerophospholipid metabolism. In terms of biological role, catalyzes the reduction of the glycolytic intermediate dihydroxyacetone phosphate (DHAP) to sn-glycerol 3-phosphate (G3P), the key precursor for phospholipid synthesis. In Dechloromonas aromatica (strain RCB), this protein is Glycerol-3-phosphate dehydrogenase [NAD(P)+].